Consider the following 266-residue polypeptide: OCIA domain-containing protein 1 (266 aa).

Residues 1 to 114 enclose the OCIA domain; sequence MSQASSGFTP…MKLENSPLGE (114 aa). Disordered regions lie at residues 127-213 and 225-266; these read EMNQ…DVPK and KNRE…SWEE. Residues 135–155 show a composition bias toward polar residues; the sequence is PNSSESQQPGSESVQQPATEV. Residues 156-178 are compositionally biased toward low complexity; that stretch reads SSATESYSSYTSDYTYSTPSQSY. A compositionally biased stretch (polar residues) spans 179–188; it reads ETTPFSSGFS. Basic and acidic residues predominate over residues 250–266; sequence QPKKEAKKNKYGDSWEE.

Belongs to the OCIAD1 family.

The protein localises to the endosome. This Danio rerio (Zebrafish) protein is OCIA domain-containing protein 1 (ociad1).